We begin with the raw amino-acid sequence, 350 residues long: Opsin, longwave 563 nm (350 aa).

The Extracellular segment spans residues 1–45 (HRLAGRHPQDNYEDSTQSSIFTYTNSNSTRGPFEGPNYHIAPRWV). N-linked (GlcNAc...) asparagine glycosylation occurs at Asn27. The helical transmembrane segment at 46–70 (YHLTSVWMLFVVVASVFTNGLVLAA) threads the bilayer. Residues 71 to 82 (TMKFKKLRHPLN) lie on the Cytoplasmic side of the membrane. A helical transmembrane segment spans residues 83–108 (WILVNLAIADLAETVIASTISVVNQV). The Extracellular portion of the chain corresponds to 109 to 122 (HGYFVLGHPMCVLE). The cysteines at positions 119 and 196 are disulfide-linked. Residues 123-142 (GYTVSLCGITGLWSLAIISW) traverse the membrane as a helical segment. The Cytoplasmic portion of the chain corresponds to 143–161 (ERWLVVCKPFGNVRFDAKL). The helical transmembrane segment at 162–185 (AIVGVAFSWIWSAVWTAPPIFGWS) threads the bilayer. Residues 186 to 211 (RYWPHGLKTSCGPDVFSGSSYPGVQS) are Extracellular-facing. A helical membrane pass occupies residues 212 to 239 (YMIVLMITCCFLPLGIIVLCYLQVWLAI). Topologically, residues 240-261 (RAVAKQQKESESTQKAEKEVTR) are cytoplasmic. The chain crosses the membrane as a helical span at residues 262–285 (MVVVMIVAYCVCWGPYTFFACFAA). Over 286 to 293 (ANPGYAFH) the chain is Extracellular. The chain crosses the membrane as a helical span at residues 294–318 (PLMAALPAYFAKSATIYNPIIYVFM). Lys305 is subject to N6-(retinylidene)lysine. The Cytoplasmic portion of the chain corresponds to 319 to 350 (NRQFRNCILQLFGKKVDDGSELSSASKTEVSS).

Belongs to the G-protein coupled receptor 1 family. Opsin subfamily. Post-translationally, phosphorylated on some or all of the serine and threonine residues present in the C-terminal region. As to expression, the color pigments are found in the cone photoreceptor cells.

It localises to the membrane. Its function is as follows. Visual pigments are the light-absorbing molecules that mediate vision. They consist of an apoprotein, opsin, covalently linked to cis-retinal. The protein is Opsin, longwave 563 nm of Callithrix jacchus (White-tufted-ear marmoset).